The sequence spans 556 residues: Adenine deaminase (556 aa).

It belongs to the metallo-dependent hydrolases superfamily. Adenine deaminase family. The cofactor is Mn(2+).

The catalysed reaction is adenine + H2O + H(+) = hypoxanthine + NH4(+). In Methanocaldococcus jannaschii (strain ATCC 43067 / DSM 2661 / JAL-1 / JCM 10045 / NBRC 100440) (Methanococcus jannaschii), this protein is Adenine deaminase.